A 446-amino-acid polypeptide reads, in one-letter code: Phosphoglucosamine mutase (446 aa).

Serine 101 acts as the Phosphoserine intermediate in catalysis. Mg(2+) is bound by residues serine 101, aspartate 240, aspartate 242, and aspartate 244. A Phosphoserine modification is found at serine 101.

It belongs to the phosphohexose mutase family. Mg(2+) serves as cofactor. Post-translationally, activated by phosphorylation.

The catalysed reaction is alpha-D-glucosamine 1-phosphate = D-glucosamine 6-phosphate. Its function is as follows. Catalyzes the conversion of glucosamine-6-phosphate to glucosamine-1-phosphate. This Pseudomonas putida (strain W619) protein is Phosphoglucosamine mutase.